Here is a 557-residue protein sequence, read N- to C-terminus: Copine-6 (557 aa).

C2 domains follow at residues 1–127 (MSDP…TKPL) and 134–263 (TAGK…MQWD). Ca(2+) is bound by residues D167, D173, D229, D231, and D237. The interval 244 to 303 (STFQEMQEGTANPGQEMQWDCINPKYRDKKKNYKSSGTVVLAQCTVEKVHTFLDYIMGGC) is linker region. In terms of domain architecture, VWFA spans 306–526 (SFTVAIDFTA…ALAKCVLAEV (221 aa)).

Belongs to the copine family. As to quaternary structure, interacts (via second C2 domain) with OS9 (via C-terminus); this interaction occurs in a calcium-dependent manner in vitro. May interact with NECAB1. Requires Ca(2+) as cofactor. As to expression, expressed in the brain. Expressed in pyramidal cells, granule cells, and neurons in the dentate gyrus of the hippocampus and in granule cells of the olfactory bulb (at protein level). Expressed in pyramidal cells of the CA1-CA3 regions, in granule cells of the dentate gyrus, in granule cells of the olfactory bulbs, in the mitral cell layer and in neurons of the cerebral cortex layer II, brainstem and spinal cord. Not detected in glial cells.

The protein resides in the cytoplasm. It localises to the cell membrane. The protein localises to the endosome. It is found in the cytoplasmic vesicle. Its subcellular location is the clathrin-coated vesicle. The protein resides in the perikaryon. It localises to the cell projection. The protein localises to the dendrite. Its function is as follows. Calcium-dependent phospholipid-binding protein that plays a role in calcium-mediated intracellular processes. Binds phospholipid membranes in a calcium-dependent manner. Plays a role in dendrite formation by melanocytes. The sequence is that of Copine-6 from Mus musculus (Mouse).